Here is a 500-residue protein sequence, read N- to C-terminus: Tektin-like protein 1 (500 aa).

Residues 1–25 (MPVLLPSTDRDQDSRVGAPEWHQAA) form a disordered region. Residue Ser14 is modified to Phosphoserine. Positions 198 to 229 (MLVWEREELKSMKRKMEKDMERSEALLKALAS) form a coiled coil. The interval 265-286 (VDITRPPTPRTQGLKTPPPDPV) is disordered. A Phosphotyrosine modification is found at Tyr372. Positions 422–448 (LTRHNLQMEKNLKELRTTHDNLAWSLN) form a coiled coil.

As to quaternary structure, microtubule inner protein component of sperm flagellar doublet microtubules.

Its subcellular location is the cytoplasm. It localises to the cytoskeleton. It is found in the flagellum axoneme. Functionally, microtubule inner protein (MIP) part of the dynein-decorated doublet microtubules (DMTs) in sperm flagellar axoneme, which is required for motile flagellum beating. Forms an extensive interaction network cross-linking the lumen of axonemal doublet microtubules. This is Tektin-like protein 1 from Rattus norvegicus (Rat).